The following is a 92-amino-acid chain: UPF0358 protein Exig_1994 (92 aa).

Belongs to the UPF0358 family.

This is UPF0358 protein Exig_1994 from Exiguobacterium sibiricum (strain DSM 17290 / CCUG 55495 / CIP 109462 / JCM 13490 / 255-15).